A 355-amino-acid chain; its full sequence is Tetraacyldisaccharide 4'-kinase (355 aa).

64–71 (YVGGTGKT) contributes to the ATP binding site. The interval 206–226 (NRAPQSSATPTAASGQGPRRA) is disordered. A compositionally biased stretch (low complexity) spans 208-222 (APQSSATPTAASGQG).

Belongs to the LpxK family.

The catalysed reaction is a lipid A disaccharide + ATP = a lipid IVA + ADP + H(+). It functions in the pathway glycolipid biosynthesis; lipid IV(A) biosynthesis; lipid IV(A) from (3R)-3-hydroxytetradecanoyl-[acyl-carrier-protein] and UDP-N-acetyl-alpha-D-glucosamine: step 6/6. Its function is as follows. Transfers the gamma-phosphate of ATP to the 4'-position of a tetraacyldisaccharide 1-phosphate intermediate (termed DS-1-P) to form tetraacyldisaccharide 1,4'-bis-phosphate (lipid IVA). In Bordetella petrii (strain ATCC BAA-461 / DSM 12804 / CCUG 43448), this protein is Tetraacyldisaccharide 4'-kinase.